Consider the following 309-residue polypeptide: Olfactory receptor-like protein OLF4 (309 aa).

At 1-25 the chain is on the extracellular side; sequence MELENDTRIPEFLLLGFSEEPKLQP. N-linked (GlcNAc...) asparagine glycosylation occurs at asparagine 5. A helical membrane pass occupies residues 26–49; that stretch reads FLFGLFLSMYLVTILGNLLLILAV. At 50–57 the chain is on the cytoplasmic side; it reads SSDSHLHT. A helical transmembrane segment spans residues 58–79; it reads PMYFFLANLSFVDICFTCTTIP. Over 80–100 the chain is Extracellular; sequence KMLVNIQTQRKVITYESCIIQ. Residues 101 to 120 form a helical membrane-spanning segment; that stretch reads MYFFELFAGIDNFLLTVMAY. Over 121-139 the chain is Cytoplasmic; it reads DRYMAICYPLHYMVIMNPQ. Residues 140 to 158 traverse the membrane as a helical segment; sequence LCSLLLLVSWIMSALHSLL. Residues 159 to 196 are Extracellular-facing; it reads QTLMVLRLSFCTHFQIPHFFCELNQMIQLACSDTFLNN. Residues 197–219 traverse the membrane as a helical segment; that stretch reads MMLYFAAILLGVAPLVGVLYSYF. Residues 220–236 lie on the Cytoplasmic side of the membrane; sequence KIVSSIRGISSAHSKYK. Residues 237–260 traverse the membrane as a helical segment; the sequence is AFSTCASHLSVVSLFYCTSLGVYL. The Extracellular segment spans residues 261-272; that stretch reads SSAAPQSTHTSS. A helical membrane pass occupies residues 273 to 292; that stretch reads VASVMYTVVTPMLNPFIYSL. The Cytoplasmic portion of the chain corresponds to 293–309; that stretch reads RNKDIKGALNVFFRGKP.

It belongs to the G-protein coupled receptor 1 family.

The protein localises to the cell membrane. Its function is as follows. Putative odorant or sperm cell receptor. This Canis lupus familiaris (Dog) protein is Olfactory receptor-like protein OLF4.